A 188-amino-acid chain; its full sequence is Elongation factor P (188 aa).

Belongs to the elongation factor P family.

It is found in the cytoplasm. Its pathway is protein biosynthesis; polypeptide chain elongation. Involved in peptide bond synthesis. Stimulates efficient translation and peptide-bond synthesis on native or reconstituted 70S ribosomes in vitro. Probably functions indirectly by altering the affinity of the ribosome for aminoacyl-tRNA, thus increasing their reactivity as acceptors for peptidyl transferase. This is Elongation factor P from Phenylobacterium zucineum (strain HLK1).